A 114-amino-acid chain; its full sequence is Propane 2-monooxygenase, effector component (114 aa).

The protein belongs to the TmoD/XamoD family. The propane 2-monooxygenase multicomponent enzyme system is composed of an electron transfer component and a monooxygenase component interacting with the effector protein MimD. The electron transfer component is composed of a reductase (MimB), and the monooxygenase component is formed by a large subunit (MimA) and a small subunit (MimC).

Effector component of the propane 2-monooxygenase multicomponent enzyme system which is involved in the degradation of propane via the O2-dependent hydroxylation of propane. The sequence is that of Propane 2-monooxygenase, effector component from Mycolicibacterium smegmatis (strain ATCC 700084 / mc(2)155) (Mycobacterium smegmatis).